A 154-amino-acid polypeptide reads, in one-letter code: Small heat shock protein C2 (154 aa).

In terms of domain architecture, sHSP spans 43–154; the sequence is STEKNLIPRT…GKTRKIEVKG (112 aa).

It belongs to the small heat shock protein (HSP20) family.

This Rickettsia felis (strain ATCC VR-1525 / URRWXCal2) (Rickettsia azadi) protein is Small heat shock protein C2 (hspC2).